A 180-amino-acid chain; its full sequence is Inner membrane-spanning protein YciB (180 aa).

6 helical membrane passes run 4–24 (LLSE…GGGI), 25–45 (QSAT…CYII), 49–69 (VSKL…ITLI), 76–96 (IKIK…MSGI), 118–138 (IILS…NEVV), and 150–170 (FKVF…LPLL).

This sequence belongs to the YciB family.

The protein resides in the cell inner membrane. Functionally, plays a role in cell envelope biogenesis, maintenance of cell envelope integrity and membrane homeostasis. This Rickettsia typhi (strain ATCC VR-144 / Wilmington) protein is Inner membrane-spanning protein YciB.